We begin with the raw amino-acid sequence, 457 residues long: Cysteine--tRNA ligase (457 aa).

Cysteine 27 lines the Zn(2+) pocket. Positions 29 to 39 (PTVYDFAHIGN) match the 'HIGH' region motif. 3 residues coordinate Zn(2+): cysteine 211, histidine 236, and glutamate 240. The 'KMSKS' region motif lies at 269 to 273 (KMSKS). Position 272 (lysine 272) interacts with ATP.

This sequence belongs to the class-I aminoacyl-tRNA synthetase family. In terms of assembly, monomer. Zn(2+) serves as cofactor.

It is found in the cytoplasm. The enzyme catalyses tRNA(Cys) + L-cysteine + ATP = L-cysteinyl-tRNA(Cys) + AMP + diphosphate. This chain is Cysteine--tRNA ligase, found in Ehrlichia ruminantium (strain Welgevonden).